The chain runs to 161 residues: Allophycocyanin alpha chain (161 aa).

At Asn-71 the chain carries N4-methylasparagine. (2R,3E)-phycocyanobilin is bound at residue Cys-81.

The protein belongs to the phycobiliprotein family. As to quaternary structure, heterodimer of an alpha and a beta chain. Contains one covalently linked phycocyanobilin chromophore.

The protein resides in the cellular thylakoid membrane. In terms of biological role, light-harvesting photosynthetic bile pigment-protein from the phycobiliprotein complex. Allophycocyanin has a maximum absorption at approximately 650 nanometers. The protein is Allophycocyanin alpha chain (apcA) of Thermosynechococcus vestitus (strain NIES-2133 / IAM M-273 / BP-1).